A 335-amino-acid polypeptide reads, in one-letter code: 5-dehydro-2-deoxygluconokinase (335 aa).

The protein belongs to the carbohydrate kinase PfkB family.

The catalysed reaction is 5-dehydro-2-deoxy-D-gluconate + ATP = 6-phospho-5-dehydro-2-deoxy-D-gluconate + ADP + H(+). Its pathway is polyol metabolism; myo-inositol degradation into acetyl-CoA; acetyl-CoA from myo-inositol: step 5/7. Catalyzes the phosphorylation of 5-dehydro-2-deoxy-D-gluconate (2-deoxy-5-keto-D-gluconate or DKG) to 6-phospho-5-dehydro-2-deoxy-D-gluconate (DKGP). This is 5-dehydro-2-deoxygluconokinase from Geobacillus kaustophilus (strain HTA426).